Here is a 522-residue protein sequence, read N- to C-terminus: uncharacterized protein (522 aa).

This is an uncharacterized protein from Sinorhizobium fredii (strain NBRC 101917 / NGR234).